Reading from the N-terminus, the 220-residue chain is UPF0319 protein YccT (220 aa).

Positions 1 to 20 (MKTGALATFLALCLPVTVFA) are cleaved as a signal peptide.

The protein belongs to the UPF0319 family.

In Salmonella agona (strain SL483), this protein is UPF0319 protein YccT.